A 284-amino-acid polypeptide reads, in one-letter code: 2-dehydro-3-deoxyphosphooctonate aldolase (284 aa).

Belongs to the KdsA family.

Its subcellular location is the cytoplasm. It catalyses the reaction D-arabinose 5-phosphate + phosphoenolpyruvate + H2O = 3-deoxy-alpha-D-manno-2-octulosonate-8-phosphate + phosphate. It participates in carbohydrate biosynthesis; 3-deoxy-D-manno-octulosonate biosynthesis; 3-deoxy-D-manno-octulosonate from D-ribulose 5-phosphate: step 2/3. The protein operates within bacterial outer membrane biogenesis; lipopolysaccharide biosynthesis. This Ralstonia pickettii (strain 12J) protein is 2-dehydro-3-deoxyphosphooctonate aldolase.